The chain runs to 395 residues: Elongation factor Tu (395 aa).

Residues 10 to 204 enclose the tr-type G domain; sequence KPHVNVGTIG…AVDEYIPEPT (195 aa). The interval 19–26 is G1; sequence GHVDHGKT. A GTP-binding site is contributed by 19–26; the sequence is GHVDHGKT. Thr26 is a binding site for Mg(2+). Positions 60 to 64 are G2; it reads GITIA. Residues 81 to 84 are G3; it reads DCPG. GTP is bound by residues 81–85 and 136–139; these read DCPGH and NKVD. The G4 stretch occupies residues 136–139; the sequence is NKVD. The segment at 174–176 is G5; it reads SAL.

This sequence belongs to the TRAFAC class translation factor GTPase superfamily. Classic translation factor GTPase family. EF-Tu/EF-1A subfamily. In terms of assembly, monomer.

The protein resides in the cytoplasm. It carries out the reaction GTP + H2O = GDP + phosphate + H(+). Functionally, GTP hydrolase that promotes the GTP-dependent binding of aminoacyl-tRNA to the A-site of ribosomes during protein biosynthesis. The protein is Elongation factor Tu of Exiguobacterium sibiricum (strain DSM 17290 / CCUG 55495 / CIP 109462 / JCM 13490 / 255-15).